Reading from the N-terminus, the 201-residue chain is ATP-dependent Clp protease proteolytic subunit (201 aa).

Serine 101 acts as the Nucleophile in catalysis. The active site involves histidine 126.

The protein belongs to the peptidase S14 family. As to quaternary structure, fourteen ClpP subunits assemble into 2 heptameric rings which stack back to back to give a disk-like structure with a central cavity, resembling the structure of eukaryotic proteasomes.

The protein localises to the cytoplasm. The enzyme catalyses Hydrolysis of proteins to small peptides in the presence of ATP and magnesium. alpha-casein is the usual test substrate. In the absence of ATP, only oligopeptides shorter than five residues are hydrolyzed (such as succinyl-Leu-Tyr-|-NHMec, and Leu-Tyr-Leu-|-Tyr-Trp, in which cleavage of the -Tyr-|-Leu- and -Tyr-|-Trp bonds also occurs).. Functionally, cleaves peptides in various proteins in a process that requires ATP hydrolysis. Has a chymotrypsin-like activity. Plays a major role in the degradation of misfolded proteins. The protein is ATP-dependent Clp protease proteolytic subunit of Francisella philomiragia subsp. philomiragia (strain ATCC 25017 / CCUG 19701 / FSC 153 / O#319-036).